A 909-amino-acid chain; its full sequence is Protein translocase subunit SecA (909 aa).

ATP is bound by residues Q87, 105 to 109, and D507; that span reads GEGKT. The segment at 834 to 909 is disordered; it reads EAVEEQRRRQ…KYKQCCGKLS (76 aa). Positions 837–848 are enriched in basic and acidic residues; that stretch reads EEQRRRQGDMQY. Over residues 859–871 the composition is skewed to gly residues; the sequence is QGAGGEGAAGGTA. The Zn(2+) site is built by C893, C895, C904, and C905.

The protein belongs to the SecA family. In terms of assembly, monomer and homodimer. Part of the essential Sec protein translocation apparatus which comprises SecA, SecYEG and auxiliary proteins SecDF-YajC and YidC. Zn(2+) serves as cofactor.

Its subcellular location is the cell inner membrane. It localises to the cytoplasm. It catalyses the reaction ATP + H2O + cellular proteinSide 1 = ADP + phosphate + cellular proteinSide 2.. Functionally, part of the Sec protein translocase complex. Interacts with the SecYEG preprotein conducting channel. Has a central role in coupling the hydrolysis of ATP to the transfer of proteins into and across the cell membrane, serving both as a receptor for the preprotein-SecB complex and as an ATP-driven molecular motor driving the stepwise translocation of polypeptide chains across the membrane. The polypeptide is Protein translocase subunit SecA (Alkalilimnicola ehrlichii (strain ATCC BAA-1101 / DSM 17681 / MLHE-1)).